The following is a 289-amino-acid chain: Protease HtpX (289 aa).

The next 2 membrane-spanning stretches (helical) occupy residues 6–26 and 38–58; these read ILFL…LNII and TGIL…SLFM. His-144 is a binding site for Zn(2+). The active site involves Glu-145. His-148 contacts Zn(2+). A run of 2 helical transmembrane segments spans residues 152–172 and 194–214; these read GDMV…IFLS and LVFW…ATMI. Glu-223 is a Zn(2+) binding site.

Belongs to the peptidase M48B family. Zn(2+) is required as a cofactor.

It localises to the cell inner membrane. The protein is Protease HtpX of Haemophilus ducreyi (strain 35000HP / ATCC 700724).